Reading from the N-terminus, the 482-residue chain is UDP-N-acetylmuramate--L-alanine ligase (482 aa).

111–117 (GTHGKTT) is an ATP binding site.

The protein belongs to the MurCDEF family.

Its subcellular location is the cytoplasm. It catalyses the reaction UDP-N-acetyl-alpha-D-muramate + L-alanine + ATP = UDP-N-acetyl-alpha-D-muramoyl-L-alanine + ADP + phosphate + H(+). It participates in cell wall biogenesis; peptidoglycan biosynthesis. In terms of biological role, cell wall formation. The sequence is that of UDP-N-acetylmuramate--L-alanine ligase from Symbiobacterium thermophilum (strain DSM 24528 / JCM 14929 / IAM 14863 / T).